A 410-amino-acid polypeptide reads, in one-letter code: Argininosuccinate synthase (410 aa).

Residues 10–18 and alanine 37 each bind ATP; that span reads AYSGGLDTS. Residues tyrosine 90 and serine 95 each coordinate L-citrulline. Position 120 (glycine 120) interacts with ATP. Positions 122, 126, and 127 each coordinate L-aspartate. Asparagine 126 lines the L-citrulline pocket. Positions 130, 182, 191, 267, and 279 each coordinate L-citrulline.

This sequence belongs to the argininosuccinate synthase family. Type 1 subfamily. As to quaternary structure, homotetramer.

It localises to the cytoplasm. It carries out the reaction L-citrulline + L-aspartate + ATP = 2-(N(omega)-L-arginino)succinate + AMP + diphosphate + H(+). It functions in the pathway amino-acid biosynthesis; L-arginine biosynthesis; L-arginine from L-ornithine and carbamoyl phosphate: step 2/3. The polypeptide is Argininosuccinate synthase (Polynucleobacter necessarius subsp. necessarius (strain STIR1)).